A 404-amino-acid polypeptide reads, in one-letter code: Probable tRNA sulfurtransferase (404 aa).

A THUMP domain is found at 60–165 (QPIVEALKLV…DEAAYISYEE (106 aa)). Residues 183-184 (ML), 208-209 (HF), Arg265, Gly287, and Gln296 each bind ATP.

This sequence belongs to the ThiI family.

It is found in the cytoplasm. It catalyses the reaction [ThiI sulfur-carrier protein]-S-sulfanyl-L-cysteine + a uridine in tRNA + 2 reduced [2Fe-2S]-[ferredoxin] + ATP + H(+) = [ThiI sulfur-carrier protein]-L-cysteine + a 4-thiouridine in tRNA + 2 oxidized [2Fe-2S]-[ferredoxin] + AMP + diphosphate. The catalysed reaction is [ThiS sulfur-carrier protein]-C-terminal Gly-Gly-AMP + S-sulfanyl-L-cysteinyl-[cysteine desulfurase] + AH2 = [ThiS sulfur-carrier protein]-C-terminal-Gly-aminoethanethioate + L-cysteinyl-[cysteine desulfurase] + A + AMP + 2 H(+). It functions in the pathway cofactor biosynthesis; thiamine diphosphate biosynthesis. Functionally, catalyzes the ATP-dependent transfer of a sulfur to tRNA to produce 4-thiouridine in position 8 of tRNAs, which functions as a near-UV photosensor. Also catalyzes the transfer of sulfur to the sulfur carrier protein ThiS, forming ThiS-thiocarboxylate. This is a step in the synthesis of thiazole, in the thiamine biosynthesis pathway. The sulfur is donated as persulfide by IscS. This chain is Probable tRNA sulfurtransferase, found in Streptococcus pyogenes serotype M3 (strain ATCC BAA-595 / MGAS315).